Here is a 424-residue protein sequence, read N- to C-terminus: Putative ankyrin repeat protein R858 (424 aa).

ANK repeat units follow at residues 115-144, 147-177, 184-215, and 219-252; these read HLMC…FTKR, TDHT…SDYF, INDS…SINY, and TGST…DIHE.

This Acanthamoeba polyphaga (Amoeba) protein is Putative ankyrin repeat protein R858.